The primary structure comprises 92 residues: PqqA binding protein (92 aa).

The protein belongs to the PqqD family. As to quaternary structure, monomer. Interacts with PqqE.

Its pathway is cofactor biosynthesis; pyrroloquinoline quinone biosynthesis. Functions as a PqqA binding protein and presents PqqA to PqqE, in the pyrroloquinoline quinone (PQQ) biosynthetic pathway. This chain is PqqA binding protein, found in Stutzerimonas stutzeri (strain A1501) (Pseudomonas stutzeri).